A 209-amino-acid chain; its full sequence is Uracil phosphoribosyltransferase (209 aa).

Residues arginine 79, arginine 104, and 131–139 (DPMLATGGS) each bind 5-phospho-alpha-D-ribose 1-diphosphate. Residues valine 194 and 199–201 (GDA) each bind uracil. Residue aspartate 200 participates in 5-phospho-alpha-D-ribose 1-diphosphate binding.

The protein belongs to the UPRTase family. It depends on Mg(2+) as a cofactor.

The enzyme catalyses UMP + diphosphate = 5-phospho-alpha-D-ribose 1-diphosphate + uracil. Its pathway is pyrimidine metabolism; UMP biosynthesis via salvage pathway; UMP from uracil: step 1/1. Allosterically activated by GTP. In terms of biological role, catalyzes the conversion of uracil and 5-phospho-alpha-D-ribose 1-diphosphate (PRPP) to UMP and diphosphate. The sequence is that of Uracil phosphoribosyltransferase from Bacillus cytotoxicus (strain DSM 22905 / CIP 110041 / 391-98 / NVH 391-98).